The sequence spans 318 residues: Phosphatidylglycerol--prolipoprotein diacylglyceryl transferase (318 aa).

A run of 3 helical transmembrane segments spans residues 24–44, 60–80, and 115–135; these read GPST…YLLP, LLLL…VFEI, and LFSG…LFIT. A 1,2-diacyl-sn-glycero-3-phospho-(1'-sn-glycerol) is bound at residue Arg164. 2 consecutive transmembrane segments (helical) span residues 198 to 218 and 285 to 305; these read VPVW…FFYF and GFSQ…FFIL.

The protein belongs to the Lgt family.

The protein resides in the cell inner membrane. It carries out the reaction L-cysteinyl-[prolipoprotein] + a 1,2-diacyl-sn-glycero-3-phospho-(1'-sn-glycerol) = an S-1,2-diacyl-sn-glyceryl-L-cysteinyl-[prolipoprotein] + sn-glycerol 1-phosphate + H(+). Its pathway is protein modification; lipoprotein biosynthesis (diacylglyceryl transfer). Catalyzes the transfer of the diacylglyceryl group from phosphatidylglycerol to the sulfhydryl group of the N-terminal cysteine of a prolipoprotein, the first step in the formation of mature lipoproteins. This chain is Phosphatidylglycerol--prolipoprotein diacylglyceryl transferase, found in Leptospira interrogans serogroup Icterohaemorrhagiae serovar copenhageni (strain Fiocruz L1-130).